Here is a 165-residue protein sequence, read N- to C-terminus: 3-isopropylmalate dehydratase small subunit (165 aa).

It belongs to the LeuD family. LeuD type 2 subfamily. In terms of assembly, heterodimer of LeuC and LeuD.

The enzyme catalyses (2R,3S)-3-isopropylmalate = (2S)-2-isopropylmalate. It functions in the pathway amino-acid biosynthesis; L-leucine biosynthesis; L-leucine from 3-methyl-2-oxobutanoate: step 2/4. Its function is as follows. Catalyzes the isomerization between 2-isopropylmalate and 3-isopropylmalate, via the formation of 2-isopropylmaleate. The protein is 3-isopropylmalate dehydratase small subunit of Desulfovibrio desulfuricans (strain ATCC 27774 / DSM 6949 / MB).